Reading from the N-terminus, the 190-residue chain is Ion-translocating oxidoreductase complex subunit B (190 aa).

Residues 1-26 (MLTFWLAVATLSALALVAGAVLGFAA) are hydrophobic. Positions 32–90 (KTDPVAERIDALLPQSQCAQCGYPGCRPYAEAVAGGAPINKCVPGGEAVMLKIAAQLSV) constitute a 4Fe-4S domain. Residues cysteine 49, cysteine 52, cysteine 57, cysteine 73, cysteine 115, cysteine 118, cysteine 121, cysteine 125, cysteine 145, cysteine 148, cysteine 151, and cysteine 155 each coordinate [4Fe-4S] cluster. 4Fe-4S ferredoxin-type domains follow at residues 106 to 135 (RVAWIDEGNCIGCTKCIQACPVDAIVGATR) and 136 to 165 (AVHTVVSDLCTGCDLCVAPCPTNCIEMRPL).

The protein belongs to the 4Fe4S bacterial-type ferredoxin family. RnfB subfamily. In terms of assembly, the complex is composed of six subunits: RnfA, RnfB, RnfC, RnfD, RnfE and RnfG. [4Fe-4S] cluster serves as cofactor.

Its subcellular location is the cell inner membrane. Functionally, part of a membrane-bound complex that couples electron transfer with translocation of ions across the membrane. This is Ion-translocating oxidoreductase complex subunit B from Sodalis glossinidius (strain morsitans).